Reading from the N-terminus, the 554-residue chain is Putative F-box/LRR-repeat protein 8 (554 aa).

Positions 71–117 (YDYISNLPDECLSLIFQSLTCADLKRCSLVCRRWLTIEGQCRHRLSL) constitute an F-box domain. LRR repeat units follow at residues 119–144 (AQSD…VLRS), 148–173 (SLGI…KLRG), 174–199 (CPEI…SFGS), 205–224 (KGMN…SVKR), 250–275 (KELH…KIFR), 301–325 (RIQM…HLVK), 326–351 (TPDC…HIDG), 354–379 (TNRI…VLIG), 383–404 (TKLS…ALCG), 405–428 (SDTV…KLCI), 430–455 (NCPI…KVKK), and 456–480 (CRGV…NLDA).

This Arabidopsis thaliana (Mouse-ear cress) protein is Putative F-box/LRR-repeat protein 8 (FBL8).